The sequence spans 205 residues: ESCRT-related protein CHMP1 (205 aa).

2 coiled-coil regions span residues 13–51 (DLKF…MDGA) and 109–140 (GNLQ…GAMA).

Belongs to the SNF7 family.

It localises to the cytoplasm. The protein resides in the endosome membrane. In terms of biological role, involved in ESCRT-dependent multivesicular body (MVB) formation and sorting of endosomal cargo proteins into MVBs. In Oryza sativa subsp. japonica (Rice), this protein is ESCRT-related protein CHMP1.